The chain runs to 131 residues: Large ribosomal subunit protein bL17 (131 aa).

It belongs to the bacterial ribosomal protein bL17 family. In terms of assembly, part of the 50S ribosomal subunit. Contacts protein L32.

The protein is Large ribosomal subunit protein bL17 of Nitrosospira multiformis (strain ATCC 25196 / NCIMB 11849 / C 71).